We begin with the raw amino-acid sequence, 341 residues long: Undecaprenyl-phosphate 4-deoxy-4-formamido-L-arabinose transferase (341 aa).

The next 2 helical transmembrane spans lie at 235–255 (LSIVGFSLAALGMLFAFALIV) and 269–289 (LFVLFAVLFVFTGGQFIGMGL).

Belongs to the glycosyltransferase 2 family.

Its subcellular location is the cell inner membrane. The catalysed reaction is UDP-4-deoxy-4-formamido-beta-L-arabinose + di-trans,octa-cis-undecaprenyl phosphate = 4-deoxy-4-formamido-alpha-L-arabinopyranosyl di-trans,octa-cis-undecaprenyl phosphate + UDP. It participates in glycolipid biosynthesis; 4-amino-4-deoxy-alpha-L-arabinose undecaprenyl phosphate biosynthesis; 4-amino-4-deoxy-alpha-L-arabinose undecaprenyl phosphate from UDP-4-deoxy-4-formamido-beta-L-arabinose and undecaprenyl phosphate: step 1/2. The protein operates within bacterial outer membrane biogenesis; lipopolysaccharide biosynthesis. Its function is as follows. Catalyzes the transfer of 4-deoxy-4-formamido-L-arabinose from UDP to undecaprenyl phosphate. The modified arabinose is attached to lipid A and is required for resistance to polymyxin and cationic antimicrobial peptides. This chain is Undecaprenyl-phosphate 4-deoxy-4-formamido-L-arabinose transferase, found in Pseudomonas fluorescens (strain SBW25).